Here is a 436-residue protein sequence, read N- to C-terminus: Platelet-activating factor acetylhydrolase (436 aa).

The first 21 residues, Met1–Pro21, serve as a signal peptide directing secretion. N-linked (GlcNAc...) asparagine glycans are attached at residues Asn76 and Asn200. Residue Ser271 is the Nucleophile of the active site. Asp294 acts as the Charge relay system in catalysis. Asn324 carries N-linked (GlcNAc...) asparagine glycosylation. The active-site Charge relay system is His349.

Belongs to the AB hydrolase superfamily. Lipase family. Post-translationally, N-glycosylated. As to expression, plasma.

The protein localises to the secreted. It is found in the extracellular space. It catalyses the reaction a 1-O-alkyl-2-acetyl-sn-glycero-3-phosphocholine + H2O = a 1-O-alkyl-sn-glycero-3-phosphocholine + acetate + H(+). The enzyme catalyses 1-O-decyl-2-acetyl-sn-glycero-3-phosphocholine + H2O = 1-O-decyl-sn-glycero-3-phosphocholine + acetate + H(+). The catalysed reaction is 1-O-dodecyl-2-acetyl-sn-glycero-3-phosphocholine + H2O = 1-O-dodecyl-sn-glycero-3-phosphocholine + acetate + H(+). It carries out the reaction 1-O-tetradecyl-2-acetyl-sn-glycero-3-phosphocholine + H2O = 1-O-tetradecyl-sn-glycero-3-phosphocholine + acetate + H(+). It catalyses the reaction 1-O-hexadecyl-2-acetyl-sn-glycero-3-phosphocholine + H2O = 1-O-hexadecyl-sn-glycero-3-phosphocholine + acetate + H(+). The enzyme catalyses 1-O-octadecyl-2-acetyl-sn-glycero-3-phosphocholine + H2O = 1-O-octadecyl-sn-glycero-3-phosphocholine + acetate + H(+). The catalysed reaction is 1-hexadecanoyl-2-acetyl-sn-glycero-3-phosphocholine + H2O = 1-hexadecanoyl-sn-glycero-3-phosphocholine + acetate + H(+). It carries out the reaction 1-hexadecanoyl-2-propionyl-sn-glycero-3-phosphocholine + H2O = propanoate + 1-hexadecanoyl-sn-glycero-3-phosphocholine + H(+). It catalyses the reaction 1-hexadecanoyl-2-butanoyl-sn-glycero-3-phosphocholine + H2O = butanoate + 1-hexadecanoyl-sn-glycero-3-phosphocholine + H(+). The enzyme catalyses 1-hexadecanoyl-2-pentanoyl-sn-glycero-3-phosphocholine + H2O = pentanoate + 1-hexadecanoyl-sn-glycero-3-phosphocholine + H(+). The catalysed reaction is 1-hexadecanoyl-2-glutaroyl-sn-glycero-3-phosphocholine + H2O = glutarate + 1-hexadecanoyl-sn-glycero-3-phosphocholine + H(+). It carries out the reaction 1-hexadecanoyl-2-(5-oxopentanoyl)-sn-glycero-3-phosphocholine + H2O = 5-oxopentanoate + 1-hexadecanoyl-sn-glycero-3-phosphocholine + H(+). It catalyses the reaction 1-hexadecanoyl-2-(9-oxononanoyl)-sn-glycero-3-phosphocholine + H2O = 9-oxononanoate + 1-hexadecanoyl-sn-glycero-3-phosphocholine + H(+). The enzyme catalyses 1-hexadecanoyl-2-[9-hydroperoxy-(10E-octadecenoyl)]-sn-glycero-3-phosphocholine + H2O = 9-hydroperoxy-10E-octadecenoate + 1-hexadecanoyl-sn-glycero-3-phosphocholine + H(+). The catalysed reaction is 1-hexadecanoyl-2-(10-hydroperoxy-8E-octadecenoyl)-sn-glycero-3-phosphocholine + H2O = 10-hydroperoxy-(8E)-octadecenoate + 1-hexadecanoyl-sn-glycero-3-phosphocholine + H(+). Lipoprotein-associated calcium-independent phospholipase A2 involved in phospholipid catabolism during inflammatory and oxidative stress response. At the lipid-aqueous interface, hydrolyzes the ester bond of fatty acyl group attached at sn-2 position of phospholipids (phospholipase A2 activity). Specifically targets phospholipids with a short-chain fatty acyl group at sn-2 position. Can hydrolyze phospholipids with long fatty acyl chains, only if they carry oxidized functional groups. Hydrolyzes and inactivates platelet-activating factor (PAF, 1-O-alkyl-2-acetyl-sn-glycero-3-phosphocholine), a potent pro-inflammatory signaling lipid that acts through PTAFR on various innate immune cells. Hydrolyzes oxidatively truncated phospholipids carrying an aldehyde group at omega position, preventing their accumulation in lipoprotein particles and uncontrolled pro-inflammatory effects. As part of high-density lipoprotein (HDL) particles, can hydrolyze phospholipids having long-chain fatty acyl hydroperoxides at sn-2 position and protect against potential accumulation of these oxylipins in the vascular wall. Catalyzes the release from membrane phospholipids of F2-isoprostanes, lipid biomarkers of cellular oxidative damage. The sequence is that of Platelet-activating factor acetylhydrolase (PLA2G7) from Cavia porcellus (Guinea pig).